The following is a 361-amino-acid chain: Mannose-1-phosphate guanyltransferase 2 (361 aa).

It belongs to the transferase hexapeptide repeat family.

It is found in the cytoplasm. It catalyses the reaction alpha-D-mannose 1-phosphate + GTP + H(+) = GDP-alpha-D-mannose + diphosphate. It functions in the pathway nucleotide-sugar biosynthesis; GDP-alpha-D-mannose biosynthesis; GDP-alpha-D-mannose from alpha-D-mannose 1-phosphate (GTP route): step 1/1. Involved in cell wall synthesis where it is required for glycosylation. Involved in cell cycle progression through cell-size checkpoint. The sequence is that of Mannose-1-phosphate guanyltransferase 2 (MPG1) from Candida glabrata (strain ATCC 2001 / BCRC 20586 / JCM 3761 / NBRC 0622 / NRRL Y-65 / CBS 138) (Yeast).